A 1035-amino-acid polypeptide reads, in one-letter code: Teashirt homolog 2 (1035 aa).

Residues 1–92 are disordered; that stretch reads MPRRKQQAPK…ESLLSDASDQ (92 aa). Positions 13–42 form a coiled coil; sequence AGYAQEEQLKEEEEIKEEEEEEEDSGSVAQ. A compositionally biased stretch (acidic residues) spans 21–37; the sequence is LKEEEEIKEEEEEEEDS. Polar residues-rich tracts occupy residues 39 to 49 and 66 to 92; these read SVAQLQGSNDP and SYQN…ASDQ. Lysine 189 participates in a covalent cross-link: Glycyl lysine isopeptide (Lys-Gly) (interchain with G-Cter in SUMO2). 2 consecutive C2H2-type zinc fingers follow at residues 216-240 and 276-300; these read FRCR…ETGH and LKCM…KTKH. Residues 240-266 are disordered; the sequence is HYQDDNRKKDKLRPTSYSKPRKRAFQD. Glycyl lysine isopeptide (Lys-Gly) (interchain with G-Cter in SUMO2) cross-links involve residues lysine 307 and lysine 316. Residues 381-405 form a C2H2-type 3; atypical zinc finger; the sequence is LKCMECGSSHDTLQQLTTHMMVTGH. Lysine 418 participates in a covalent cross-link: Glycyl lysine isopeptide (Lys-Gly) (interchain with G-Cter in SUMO2). The span at 432-450 shows a compositional bias: low complexity; that stretch reads SLSDAPSSDSLAPKPSSNS. Positions 432–496 are disordered; that stretch reads SLSDAPSSDS…DPLQKPLDPA (65 aa). A compositionally biased stretch (basic and acidic residues) spans 460–483; it reads ELKRESKKEKPEELRTDEKVLKSE. Glycyl lysine isopeptide (Lys-Gly) (interchain with G-Cter in SUMO2) cross-links involve residues lysine 462, lysine 481, lysine 498, and lysine 602. Disordered stretches follow at residues 600–674 and 764–791; these read QVKK…VEPV and QPID…PQKH. Basic and acidic residues predominate over residues 601–669; that stretch reads VKKEPEDKEE…KDGGEKEKAQ (69 aa). Residues lysine 801 and lysine 821 each participate in a glycyl lysine isopeptide (Lys-Gly) (interchain with G-Cter in SUMO2) cross-link. Positions 842-912 form a DNA-binding region, homeobox; it reads RKGRQSNWNP…NVKYQLRKTG (71 aa). Residues 927–949 form a C2H2-type 4 zinc finger; that stretch reads FYCSDCASQFRTPSTYISHLESH. The span at 968 to 977 shows a compositional bias: low complexity; the sequence is VEQEISRVSS. 2 disordered regions span residues 968–987 and 1015–1035; these read VEQE…TIAG and SKTH…VDEE. The residue at position 981 (serine 981) is a Phosphoserine. A C2H2-type 5 zinc finger spans residues 995–1018; the sequence is FKCKLCCRTFVSKHAVKLHLSKTH.

Belongs to the teashirt C2H2-type zinc-finger protein family. Interacts (via homeobox domain) with APBB1 (via PID domain 1). Post-translationally, sumoylated.

Its subcellular location is the nucleus. In terms of biological role, probable transcriptional regulator involved in developmental processes. May act as a transcriptional repressor (Potential). The polypeptide is Teashirt homolog 2 (TSHZ2) (Sus scrofa (Pig)).